Reading from the N-terminus, the 745-residue chain is Chitin synthase D (745 aa).

The next 5 helical transmembrane spans lie at 26–46 (LAHRGIFLPVMIVTLPLPVHL), 55–75 (VLMLQWFAFGMFSVLLIIPWL), 412–432 (TTALLFFIIALSLITTSSSIN), 434–454 (LPVGFIAISLGLNYVLMFYLG), and 464–484 (LFPLMFILNPFFNWLYMVYGI). Disordered stretches follow at residues 613 to 635 (TGDNDNMKPYPDRQPRDTSSLHQ) and 672 to 745 (ILPH…ESMV). Residues 707-720 (NASTRGSMEGNTPE) are compositionally biased toward polar residues.

The protein belongs to the chitin synthase family. Class VI subfamily.

Its subcellular location is the cell membrane. The enzyme catalyses [(1-&gt;4)-N-acetyl-beta-D-glucosaminyl](n) + UDP-N-acetyl-alpha-D-glucosamine = [(1-&gt;4)-N-acetyl-beta-D-glucosaminyl](n+1) + UDP + H(+). Polymerizes chitin, a structural polymer of the cell wall and septum, by transferring the sugar moiety of UDP-GlcNAc to the non-reducing end of the growing chitin polymer. This chain is Chitin synthase D (chsD), found in Aspergillus fumigatus (strain ATCC MYA-4609 / CBS 101355 / FGSC A1100 / Af293) (Neosartorya fumigata).